The chain runs to 240 residues: Small ribosomal subunit protein uS3m (240 aa).

The protein belongs to the universal ribosomal protein uS3 family.

The protein resides in the mitochondrion. The sequence is that of Small ribosomal subunit protein uS3m (RPS3) from Chondrus crispus (Carrageen Irish moss).